The sequence spans 342 residues: Heparan sulfate glucosamine 3-O-sulfotransferase 6 (342 aa).

The interval M1–Q21 is disordered. The Cytoplasmic portion of the chain corresponds to M1–P31. Residues M32 to G49 form a helical; Signal-anchor for type II membrane protein membrane-spanning segment. Topologically, residues R50–G342 are lumenal. Residues A55–P85 form a disordered region. Residues E66–P85 are compositionally biased toward low complexity. Residue K100–R104 coordinates 3'-phosphoadenylyl sulfate. Residues E122 to R128 and K153 to S156 contribute to the substrate site. R181 and S189 together coordinate 3'-phosphoadenylyl sulfate. Position 220-221 (W220–S221) interacts with substrate. N-linked (GlcNAc...) asparagine glycosylation occurs at N281. C288 and C300 form a disulfide bridge. K305–H309 is a binding site for 3'-phosphoadenylyl sulfate.

It belongs to the sulfotransferase 1 family.

It localises to the golgi apparatus membrane. The catalysed reaction is alpha-D-glucosaminyl-[heparan sulfate](n) + 3'-phosphoadenylyl sulfate = 3-sulfo-alpha-D-glucosaminyl-[heparan sulfate](n) + adenosine 3',5'-bisphosphate + H(+). In terms of biological role, sulfotransferase that utilizes 3'-phospho-5'-adenylyl sulfate (PAPS) to catalyze the transfer of a sulfo group to heparan sulfate. The substrate-specific O-sulfation generates an enzyme-modified heparan sulfate which acts as a binding receptor to Herpes Simplex Virus-1 (HSV-1) and permits its entry. Unlike 3-OST-1, does not convert non-anticoagulant heparan sulfate to anticoagulant heparan sulfate. The chain is Heparan sulfate glucosamine 3-O-sulfotransferase 6 (HS3ST6) from Homo sapiens (Human).